The primary structure comprises 693 residues: Histone-lysine N-methyltransferase, H3 lysine-9 specific SUVH7 (693 aa).

2 disordered regions span residues 64-99 (WYDG…PPEM) and 111-175 (DSSN…AETE). The a.T hook DNA-binding region spans 129 to 141 (KRGRGRPKGSKNS). Residues 227–373 (GAVPGIHVGD…FKEFRFKLVR (147 aa)) form the YDG domain. Residues 454-516 (QSLGCQNCRH…HCPTRLVQTG (63 aa)) form the Pre-SET domain. Zn(2+) is bound by residues C458, C461, C466, C471, C473, C498, C502, C504, and C508. Residues 519-660 (LHLEVFKTRN…PMTELTYDYG (142 aa)) form the SET domain. S-adenosyl-L-methionine contacts are provided by residues 529-531 (CGW), D562, Y564, R614, and 617-618 (NH). The Zn(2+) site is built by C620, C681, C683, and C688. A Post-SET domain is found at 677–693 (GKKTCLCGSVKCRGSFT).

The protein belongs to the class V-like SAM-binding methyltransferase superfamily. Histone-lysine methyltransferase family. Suvar3-9 subfamily.

It localises to the nucleus. It is found in the chromosome. The protein localises to the centromere. The catalysed reaction is N(6)-methyl-L-lysyl(9)-[histone H3] + S-adenosyl-L-methionine = N(6),N(6)-dimethyl-L-lysyl(9)-[histone H3] + S-adenosyl-L-homocysteine + H(+). The enzyme catalyses L-lysyl(9)-[histone H3] + S-adenosyl-L-methionine = N(6)-methyl-L-lysyl(9)-[histone H3] + S-adenosyl-L-homocysteine + H(+). Functionally, histone methyltransferase. Methylates 'Lys-9' of histone H3. H3 'Lys-9' methylation represents a specific tag for epigenetic transcriptional repression. The chain is Histone-lysine N-methyltransferase, H3 lysine-9 specific SUVH7 (SUVH7) from Arabidopsis thaliana (Mouse-ear cress).